Consider the following 439-residue polypeptide: Na(+)/H(+) antiporter NhaA 1 (439 aa).

A run of 11 helical transmembrane segments spans residues 14–34 (ITGGILLIIAATTALFWANLA), 60–80 (ISLHQIVNEFLMAIFFFFIGL), 98–118 (ALPLFSALGGVVLPASIYYFF), 127–147 (GWGIPMATDIAFALGVLAMVG), 156–176 (IFLSALAIGDDLMAVLVIAIF), 179–199 (EQIFVNELLVGFLGLIVLAVA), 213–233 (IGLIIVWISFLASGVHATIAG), 303–323 (HPISALFIVPLFALGNAGVIV), 335–355 (IVLGIAAGLIIGKPLGIFLFA), 375–395 (IIGTGFLAGMGFTMSLFISDL), and 408–428 (VAVLLASIISGIVGYLILISA).

The protein belongs to the NhaA Na(+)/H(+) (TC 2.A.33) antiporter family.

Its subcellular location is the cell inner membrane. It catalyses the reaction Na(+)(in) + 2 H(+)(out) = Na(+)(out) + 2 H(+)(in). Its function is as follows. Na(+)/H(+) antiporter that extrudes sodium in exchange for external protons. In Psychromonas ingrahamii (strain DSM 17664 / CCUG 51855 / 37), this protein is Na(+)/H(+) antiporter NhaA 1.